The following is a 301-amino-acid chain: Vomeronasal type-1 receptor 4 (301 aa).

Over 1 to 15 (MASRYVAVGMMLSQT) the chain is Extracellular. Residues 16–36 (VVGVLGSFSLLLHYLSLHYIG) form a helical membrane-spanning segment. Over 37–48 (CRLRSADLIVKH) the chain is Cytoplasmic. Residues 49–69 (LIAASFLTLLCKGVPQTMAAF) form a helical membrane-spanning segment. Topologically, residues 70-88 (RVRYFLNAIGCKLVFYLHR) are extracellular. The chain crosses the membrane as a helical span at residues 89 to 107 (VGRGVSTGTTCLLSVFQVI). The Cytoplasmic segment spans residues 108–126 (TVSSRKSRWAKLKEKAPKH). Residues 127 to 147 (VGFSVLLCWILCMLVNIIFPI) form a helical membrane-spanning segment. Residues 148-185 (YVTGKRNHTNITVNKDLGDCCGRGNNKIAQTLRAMLLS) lie on the Extracellular side of the membrane. N-linked (GlcNAc...) asparagine glycosylation is found at N154 and N157. Residues 186–206 (FPDVLCLGFMLWASSSMVCIL) form a helical membrane-spanning segment. The Cytoplasmic portion of the chain corresponds to 207 to 234 (HRHKQRVQHIHRSNLSPRASPENRATQS). The chain crosses the membrane as a helical span at residues 235–255 (ILIPVSTFVSSYTLSCLLQVC). Residues 256–264 (MALLDNPNS) are Extracellular-facing. A helical membrane pass occupies residues 265-285 (LLVNTSALMSACFPTLSPFVL). At 286–301 (MSCDPSVYRLCFAWKR) the chain is on the cytoplasmic side.

The protein belongs to the G-protein coupled receptor 1 family.

The protein localises to the cell membrane. Its function is as follows. Putative pheromone receptor. This Pongo pygmaeus (Bornean orangutan) protein is Vomeronasal type-1 receptor 4 (VN1R4).